Here is a 112-residue protein sequence, read N- to C-terminus: Integration host factor subunit alpha (112 aa).

It belongs to the bacterial histone-like protein family. As to quaternary structure, heterodimer of an alpha and a beta chain.

This protein is one of the two subunits of integration host factor, a specific DNA-binding protein that functions in genetic recombination as well as in transcriptional and translational control. The chain is Integration host factor subunit alpha from Rhizobium etli (strain ATCC 51251 / DSM 11541 / JCM 21823 / NBRC 15573 / CFN 42).